Here is a 556-residue protein sequence, read N- to C-terminus: Phenylalanine--tRNA ligase beta subunit (556 aa).

Positions H274 to Y349 constitute a B5 domain. Mg(2+)-binding residues include D327, D333, E336, and E337.

This sequence belongs to the phenylalanyl-tRNA synthetase beta subunit family. Type 2 subfamily. In terms of assembly, tetramer of two alpha and two beta subunits. Mg(2+) serves as cofactor.

The protein localises to the cytoplasm. It catalyses the reaction tRNA(Phe) + L-phenylalanine + ATP = L-phenylalanyl-tRNA(Phe) + AMP + diphosphate + H(+). This is Phenylalanine--tRNA ligase beta subunit from Korarchaeum cryptofilum (strain OPF8).